A 326-amino-acid polypeptide reads, in one-letter code: Acetyl-coenzyme A carboxylase carboxyl transferase subunit beta (326 aa).

Residues leucine 32–asparagine 301 enclose the CoA carboxyltransferase N-terminal domain. The Zn(2+) site is built by cysteine 36, cysteine 39, cysteine 55, and cysteine 58. The C4-type zinc finger occupies cysteine 36–cysteine 58.

This sequence belongs to the AccD/PCCB family. As to quaternary structure, acetyl-CoA carboxylase is a heterohexamer composed of biotin carboxyl carrier protein (AccB), biotin carboxylase (AccC) and two subunits each of ACCase subunit alpha (AccA) and ACCase subunit beta (AccD). Zn(2+) serves as cofactor.

The protein resides in the cytoplasm. It carries out the reaction N(6)-carboxybiotinyl-L-lysyl-[protein] + acetyl-CoA = N(6)-biotinyl-L-lysyl-[protein] + malonyl-CoA. Its pathway is lipid metabolism; malonyl-CoA biosynthesis; malonyl-CoA from acetyl-CoA: step 1/1. In terms of biological role, component of the acetyl coenzyme A carboxylase (ACC) complex. Biotin carboxylase (BC) catalyzes the carboxylation of biotin on its carrier protein (BCCP) and then the CO(2) group is transferred by the transcarboxylase to acetyl-CoA to form malonyl-CoA. The chain is Acetyl-coenzyme A carboxylase carboxyl transferase subunit beta from Synechocystis sp. (strain ATCC 27184 / PCC 6803 / Kazusa).